We begin with the raw amino-acid sequence, 179 residues long: Large ribosomal subunit protein uL5 (179 aa).

The protein belongs to the universal ribosomal protein uL5 family. Part of the 50S ribosomal subunit; part of the 5S rRNA/L5/L18/L25 subcomplex. Contacts the 5S rRNA and the P site tRNA. Forms a bridge to the 30S subunit in the 70S ribosome.

This is one of the proteins that bind and probably mediate the attachment of the 5S RNA into the large ribosomal subunit, where it forms part of the central protuberance. In the 70S ribosome it contacts protein S13 of the 30S subunit (bridge B1b), connecting the 2 subunits; this bridge is implicated in subunit movement. Contacts the P site tRNA; the 5S rRNA and some of its associated proteins might help stabilize positioning of ribosome-bound tRNAs. The sequence is that of Large ribosomal subunit protein uL5 from Pasteurella multocida (strain Pm70).